Here is a 142-residue protein sequence, read N- to C-terminus: Transcription antitermination protein NusB (142 aa).

The protein belongs to the NusB family.

In terms of biological role, involved in transcription antitermination. Required for transcription of ribosomal RNA (rRNA) genes. Binds specifically to the boxA antiterminator sequence of the ribosomal RNA (rrn) operons. The protein is Transcription antitermination protein NusB of Actinobacillus succinogenes (strain ATCC 55618 / DSM 22257 / CCUG 43843 / 130Z).